The chain runs to 735 residues: Rho GTPase-activating protein SYDE1 (735 aa).

3 disordered regions span residues 1–253 (MAEP…PYEV), 601–655 (PDTR…AGDW), and 669–706 (FLSG…FDAP). The segment covering 14 to 47 (RGREKLPRKKSDAKDRGRPAQRSEPKPPEPEPRV) has biased composition (basic and acidic residues). Residues 151–160 (PTKTSRTKSP) are compositionally biased toward low complexity. Serine 224, serine 231, serine 235, and serine 244 each carry phosphoserine. One can recognise a C2 domain in the interval 249 to 366 (RPYEVGPSAR…FRGCQAQQLA (118 aa)). Residues 398-604 (LPLQLLVERE…YLLQSWPDTR (207 aa)) form the Rho-GAP domain. Over residues 669 to 679 (FLSGPDYDHVT) the composition is skewed to basic and acidic residues. Serine 681 and serine 683 each carry phosphoserine.

Post-translationally, palmitoylated. Probably palmitoylated by ZDHHC3 and ZDHHC7.

Its function is as follows. GTPase activator for the Rho-type GTPases. As a GCM1 downstream effector, it is involved in placental development and positively regulates trophoblast cells migration. It regulates cytoskeletal remodeling by controlling the activity of Rho GTPases including RHOA, CDC42 and RAC1. The chain is Rho GTPase-activating protein SYDE1 (Syde1) from Rattus norvegicus (Rat).